A 421-amino-acid chain; its full sequence is Phosphatidylinositol 5-phosphate 4-kinase type-2 gamma (421 aa).

A2 bears the N-acetylalanine mark. S26 carries the phosphoserine modification. One can recognise a PIPK domain in the interval 43-420 (AADPLVGVFL…RFLDFITNIF (378 aa)). Residues 69–75 (VMLLPDD) are required for interaction with PIP5K1A. A Phosphoserine modification is found at S349.

In terms of assembly, interacts with PIP5K1A; the interaction inhibits PIP5K1A kinase activity. In terms of processing, phosphorylated, phosphorylation is induced by EGF.

Its subcellular location is the endoplasmic reticulum. It is found in the cytoplasm. The enzyme catalyses a 1,2-diacyl-sn-glycero-3-phospho-(1D-myo-inositol-5-phosphate) + ATP = a 1,2-diacyl-sn-glycero-3-phospho-(1D-myo-inositol-4,5-bisphosphate) + ADP + H(+). The catalysed reaction is 1,2-dihexadecanoyl-sn-glycero-3-phospho-(1D-myo-inositol-5-phosphate) + ATP = 1,2-dihexadecanoyl-sn-glycero-3-phospho-(1D-myo-inositol-4,5-bisphosphate) + ADP + H(+). It catalyses the reaction 1,2-dihexadecanoyl-sn-glycero-3-phospho-(1D-myo-inositol-5-phosphate) + GTP = 1,2-dihexadecanoyl-sn-glycero-3-phospho-(1D-myo-inositol-4,5-bisphosphate) + GDP + H(+). Phosphatidylinositol 5-phosphate 4-kinase with low enzymatic activity. May be a GTP sensor, has higher GTP-dependent kinase activity than ATP-dependent kinase activity. PIP4Ks negatively regulate insulin signaling through a catalytic-independent mechanism. They interact with PIP5Ks and suppress PIP5K-mediated PtdIns(4,5)P2 synthesis and insulin-dependent conversion to PtdIns(3,4,5)P3. The chain is Phosphatidylinositol 5-phosphate 4-kinase type-2 gamma (PIP4K2C) from Pongo abelii (Sumatran orangutan).